The sequence spans 487 residues: Glycogen synthase 2 (487 aa).

Lysine 12 contacts ADP-alpha-D-glucose.

The protein belongs to the glycosyltransferase 1 family. Bacterial/plant glycogen synthase subfamily.

It catalyses the reaction [(1-&gt;4)-alpha-D-glucosyl](n) + ADP-alpha-D-glucose = [(1-&gt;4)-alpha-D-glucosyl](n+1) + ADP + H(+). It participates in glycan biosynthesis; glycogen biosynthesis. In terms of biological role, synthesizes alpha-1,4-glucan chains using ADP-glucose. The chain is Glycogen synthase 2 from Methylococcus capsulatus (strain ATCC 33009 / NCIMB 11132 / Bath).